The sequence spans 254 residues: tRNA (guanine-N(1)-)-methyltransferase (254 aa).

Residues Gly113 and 133 to 138 (IGDYVL) each bind S-adenosyl-L-methionine.

Belongs to the RNA methyltransferase TrmD family. In terms of assembly, homodimer.

It localises to the cytoplasm. It carries out the reaction guanosine(37) in tRNA + S-adenosyl-L-methionine = N(1)-methylguanosine(37) in tRNA + S-adenosyl-L-homocysteine + H(+). Specifically methylates guanosine-37 in various tRNAs. The polypeptide is tRNA (guanine-N(1)-)-methyltransferase (Edwardsiella ictaluri (strain 93-146)).